Consider the following 134-residue polypeptide: Putative integral membrane protein YxzK (134 aa).

4 helical membrane-spanning segments follow: residues 3-23 (VIRI…GEAI), 35-55 (IVGL…VSII), 58-78 (GAGF…TGVI), and 89-109 (LMLL…AGFA).

The protein resides in the cell membrane. In Bacillus subtilis (strain 168), this protein is Putative integral membrane protein YxzK (yxzK).